We begin with the raw amino-acid sequence, 190 residues long: Potassium-transporting ATPase KdpC subunit (190 aa).

A helical transmembrane segment spans residues 10–30 (TFIFLLLITGGVYPLLTTVLG).

This sequence belongs to the KdpC family. In terms of assembly, the system is composed of three essential subunits: KdpA, KdpB and KdpC.

The protein localises to the cell inner membrane. In terms of biological role, part of the high-affinity ATP-driven potassium transport (or Kdp) system, which catalyzes the hydrolysis of ATP coupled with the electrogenic transport of potassium into the cytoplasm. This subunit acts as a catalytic chaperone that increases the ATP-binding affinity of the ATP-hydrolyzing subunit KdpB by the formation of a transient KdpB/KdpC/ATP ternary complex. The polypeptide is Potassium-transporting ATPase KdpC subunit (Escherichia coli (strain 55989 / EAEC)).